The primary structure comprises 256 residues: Enolase-phosphatase E1 (256 aa).

2 residues coordinate Mg(2+): Asp-14 and Glu-16. Substrate contacts are provided by residues 142-143 (SS) and Lys-176. Asp-201 is a binding site for Mg(2+).

It belongs to the HAD-like hydrolase superfamily. MasA/MtnC family. Monomer. It depends on Mg(2+) as a cofactor.

The protein resides in the cytoplasm. Its subcellular location is the nucleus. The enzyme catalyses 5-methylsulfanyl-2,3-dioxopentyl phosphate + H2O = 1,2-dihydroxy-5-(methylsulfanyl)pent-1-en-3-one + phosphate. It participates in amino-acid biosynthesis; L-methionine biosynthesis via salvage pathway; L-methionine from S-methyl-5-thio-alpha-D-ribose 1-phosphate: step 3/6. Its pathway is amino-acid biosynthesis; L-methionine biosynthesis via salvage pathway; L-methionine from S-methyl-5-thio-alpha-D-ribose 1-phosphate: step 4/6. Functionally, bifunctional enzyme that catalyzes the enolization of 2,3-diketo-5-methylthiopentyl-1-phosphate (DK-MTP-1-P) into the intermediate 2-hydroxy-3-keto-5-methylthiopentenyl-1-phosphate (HK-MTPenyl-1-P), which is then dephosphorylated to form the acireductone 1,2-dihydroxy-3-keto-5-methylthiopentene (DHK-MTPene). This Drosophila yakuba (Fruit fly) protein is Enolase-phosphatase E1.